A 281-amino-acid chain; its full sequence is NAD kinase (281 aa).

Catalysis depends on Asp-61, which acts as the Proton acceptor. NAD(+) contacts are provided by residues Asp-61–Gly-62, Asn-134–Asp-135, Arg-145, Asp-164, Thr-175–Ser-180, and Gln-234.

It belongs to the NAD kinase family. A divalent metal cation is required as a cofactor.

The protein localises to the cytoplasm. The catalysed reaction is NAD(+) + ATP = ADP + NADP(+) + H(+). Involved in the regulation of the intracellular balance of NAD and NADP, and is a key enzyme in the biosynthesis of NADP. Catalyzes specifically the phosphorylation on 2'-hydroxyl of the adenosine moiety of NAD to yield NADP. The chain is NAD kinase from Clostridium botulinum (strain 657 / Type Ba4).